We begin with the raw amino-acid sequence, 359 residues long: Alkanal monooxygenase alpha chain (359 aa).

It belongs to the bacterial luciferase oxidoreductase family. Heterodimer of an alpha and a beta chain.

The catalysed reaction is a long-chain fatty aldehyde + FMNH2 + O2 = a long-chain fatty acid + hnu + FMN + H2O + 2 H(+). In terms of biological role, light-emitting reaction in luminous bacteria. This is Alkanal monooxygenase alpha chain (luxA) from Photorhabdus laumondii subsp. laumondii (strain DSM 15139 / CIP 105565 / TT01) (Photorhabdus luminescens subsp. laumondii).